The following is an 890-amino-acid chain: Receptor like protein 23 (890 aa).

A signal peptide spans 1–22 (MSKALLHLHFLSLFLLCCVCHS). The Extracellular segment spans residues 23–850 (SIFTLNFHFT…EEEEEVLNGR (828 aa)). 5 N-linked (GlcNAc...) asparagine glycosylation sites follow: N58, N70, N91, N109, and N145. LRR repeat units lie at residues 97-121 (FHQL…GFGN), 123-145 (KRLE…SFSN), 146-171 (LTML…GLRK), 173-195 (IVLD…LFEL), 196-218 (HQLR…KFGN), 220-243 (HRLE…ISNL), 244-268 (TRLT…NLTN), 270-290 (YELD…LLTL), 291-316 (PFLA…STSS), 318-339 (LEIM…ISKL), 340-363 (INLK…LFSS), 364-389 (LKSL…SYIP), 391-411 (TLEM…ILKT), 412-436 (LKEL…LWSL), 438-461 (LLQS…ILVN), 462-485 (SSVL…PLSI), 487-506 (GFGV…ICNR), 507-527 (SSLA…PPCL), 528-551 (RNLE…LCDG), 553-575 (SLRT…FVNC), 577-598 (SLKF…WLKA), 599-623 (LPNL…HQGP), 626-650 (FPEL…YFVN), 699-724 (LTSY…GLLK), 726-747 (LIAV…MANL), 748-771 (ENLE…LGSI), and 773-796 (FLAY…QITG). N189, N207, N242, and N265 each carry an N-linked (GlcNAc...) asparagine glycan. A glycan (N-linked (GlcNAc...) asparagine) is linked at N311. N351 is a glycosylation site (N-linked (GlcNAc...) asparagine). N461 carries N-linked (GlcNAc...) asparagine glycosylation. N-linked (GlcNAc...) asparagine glycosylation is found at N505 and N518. N-linked (GlcNAc...) asparagine glycosylation is present at N574. A glycan (N-linked (GlcNAc...) asparagine) is linked at N730. Residue N778 is glycosylated (N-linked (GlcNAc...) asparagine). The chain crosses the membrane as a helical span at residues 851-871 (AVAIGYGSGLLLGLAIAQVIA). Residues 872-890 (SYKPEWLVKIIGLNKRRKR) are Cytoplasmic-facing.

It belongs to the RLP family. As to quaternary structure, directly interacts with a 20-mer fragment (nlp20) from NLPs through its extracellular LRR domain. Component of a trimeric complex composed of RLP23, SOBIR1 and BAK1. BAK1 is recruited into a pre-formed RLP23-SOBIR1 complex in a ligand-dependent manner. Interacts with SOBIR1.

Its subcellular location is the cell membrane. Its function is as follows. Involved in the perception of necrosis and ethylene-inducing peptide 1-like proteins (NLPs), that act as extracellular signals mediating immune activation. Component of the RLP23-SOBIR1-BAK1 complex that mediates NLP-triggered immunity. The chain is Receptor like protein 23 from Arabidopsis thaliana (Mouse-ear cress).